We begin with the raw amino-acid sequence, 227 residues long: Cytochrome c oxidase subunit 2 (227 aa).

The Mitochondrial intermembrane segment spans residues 1-14 (MAYPFQLGFQDATS). The chain crosses the membrane as a helical span at residues 15–45 (PIMEELLHFHDHTLMIVFLISSLVLYIISLM). Topologically, residues 46-59 (LTTKLTHTSTMDAQ) are mitochondrial matrix. Residues 60-87 (EVETIWTILPAIILILIALPSLRILYMM) form a helical membrane-spanning segment. The Mitochondrial intermembrane segment spans residues 88-227 (DEINNPSLTV…YFEKWSASML (140 aa)). Positions 161, 196, 198, 200, 204, and 207 each coordinate Cu cation. Position 198 (E198) interacts with Mg(2+). Y218 is modified (phosphotyrosine).

It belongs to the cytochrome c oxidase subunit 2 family. In terms of assembly, component of the cytochrome c oxidase (complex IV, CIV), a multisubunit enzyme composed of 14 subunits. The complex is composed of a catalytic core of 3 subunits MT-CO1, MT-CO2 and MT-CO3, encoded in the mitochondrial DNA, and 11 supernumerary subunits COX4I, COX5A, COX5B, COX6A, COX6B, COX6C, COX7A, COX7B, COX7C, COX8 and NDUFA4, which are encoded in the nuclear genome. The complex exists as a monomer or a dimer and forms supercomplexes (SCs) in the inner mitochondrial membrane with NADH-ubiquinone oxidoreductase (complex I, CI) and ubiquinol-cytochrome c oxidoreductase (cytochrome b-c1 complex, complex III, CIII), resulting in different assemblies (supercomplex SCI(1)III(2)IV(1) and megacomplex MCI(2)III(2)IV(2)). Found in a complex with TMEM177, COA6, COX18, COX20, SCO1 and SCO2. Interacts with TMEM177 in a COX20-dependent manner. Interacts with COX20. Interacts with COX16. Cu cation serves as cofactor.

It is found in the mitochondrion inner membrane. The catalysed reaction is 4 Fe(II)-[cytochrome c] + O2 + 8 H(+)(in) = 4 Fe(III)-[cytochrome c] + 2 H2O + 4 H(+)(out). In terms of biological role, component of the cytochrome c oxidase, the last enzyme in the mitochondrial electron transport chain which drives oxidative phosphorylation. The respiratory chain contains 3 multisubunit complexes succinate dehydrogenase (complex II, CII), ubiquinol-cytochrome c oxidoreductase (cytochrome b-c1 complex, complex III, CIII) and cytochrome c oxidase (complex IV, CIV), that cooperate to transfer electrons derived from NADH and succinate to molecular oxygen, creating an electrochemical gradient over the inner membrane that drives transmembrane transport and the ATP synthase. Cytochrome c oxidase is the component of the respiratory chain that catalyzes the reduction of oxygen to water. Electrons originating from reduced cytochrome c in the intermembrane space (IMS) are transferred via the dinuclear copper A center (CU(A)) of subunit 2 and heme A of subunit 1 to the active site in subunit 1, a binuclear center (BNC) formed by heme A3 and copper B (CU(B)). The BNC reduces molecular oxygen to 2 water molecules using 4 electrons from cytochrome c in the IMS and 4 protons from the mitochondrial matrix. This Felis catus (Cat) protein is Cytochrome c oxidase subunit 2 (MT-CO2).